We begin with the raw amino-acid sequence, 226 residues long: Ribonuclease 3 (226 aa).

The RNase III domain maps to Ile-6–Asp-128. Glu-41 is a binding site for Mg(2+). Asp-45 is an active-site residue. The Mg(2+) site is built by Asp-114 and Glu-117. Glu-117 is an active-site residue. Residues Asp-155–Ile-225 enclose the DRBM domain.

This sequence belongs to the ribonuclease III family. As to quaternary structure, homodimer. Mg(2+) is required as a cofactor.

The protein localises to the cytoplasm. The catalysed reaction is Endonucleolytic cleavage to 5'-phosphomonoester.. Digests double-stranded RNA. Involved in the processing of primary rRNA transcript to yield the immediate precursors to the large and small rRNAs (23S and 16S). Processes some mRNAs, and tRNAs when they are encoded in the rRNA operon. Processes pre-crRNA and tracrRNA of type II CRISPR loci if present in the organism. The sequence is that of Ribonuclease 3 from Erwinia tasmaniensis (strain DSM 17950 / CFBP 7177 / CIP 109463 / NCPPB 4357 / Et1/99).